A 194-amino-acid polypeptide reads, in one-letter code: Probable GTP-binding protein EngB (194 aa).

One can recognise an EngB-type G domain in the interval 22-194 (DLPEYALAGR…AWQFIKEGME (173 aa)). Residues 30–37 (GRSNVGKS), 57–61 (GKTQT), 75–78 (DVPG), 142–145 (TKAD), and 174–176 (FSS) contribute to the GTP site. Mg(2+) is bound by residues Ser37 and Thr59.

This sequence belongs to the TRAFAC class TrmE-Era-EngA-EngB-Septin-like GTPase superfamily. EngB GTPase family. Mg(2+) is required as a cofactor.

Functionally, necessary for normal cell division and for the maintenance of normal septation. The protein is Probable GTP-binding protein EngB of Listeria welshimeri serovar 6b (strain ATCC 35897 / DSM 20650 / CCUG 15529 / CIP 8149 / NCTC 11857 / SLCC 5334 / V8).